The chain runs to 432 residues: Proline--tRNA ligase (432 aa).

It belongs to the class-II aminoacyl-tRNA synthetase family. ProS type 2 subfamily. As to quaternary structure, homodimer.

It is found in the cytoplasm. It catalyses the reaction tRNA(Pro) + L-proline + ATP = L-prolyl-tRNA(Pro) + AMP + diphosphate. In terms of biological role, catalyzes the attachment of proline to tRNA(Pro) in a two-step reaction: proline is first activated by ATP to form Pro-AMP and then transferred to the acceptor end of tRNA(Pro). This chain is Proline--tRNA ligase, found in Rickettsia prowazekii (strain Madrid E).